Reading from the N-terminus, the 515-residue chain is Probable multifunctional siroheme biosynthesis protein HemA (515 aa).

NAD(+)-binding positions include Ser26–Leu27 and Ile47–Arg48. The glutamyl-tRNA reductase stretch occupies residues Ser26–Ile174. Residues Thr68–Arg71, Ser127, Glu132, and Gln138 each bind L-glutamyl-tRNA(Glu). Cys69 functions as the Nucleophile in the catalytic mechanism. NADP(+) is bound at residue Gly206–Gly211. A precorrin-2 dehydrogenase /sirohydrochlorin ferrochelatase region spans residues Phe367 to Ile507.

It in the N-terminal section; belongs to the glutamyl-tRNA reductase family. In the C-terminal section; belongs to the precorrin-2 dehydrogenase / sirohydrochlorin ferrochelatase family. In terms of assembly, homodimer.

It carries out the reaction (S)-4-amino-5-oxopentanoate + tRNA(Glu) + NADP(+) = L-glutamyl-tRNA(Glu) + NADPH + H(+). The enzyme catalyses precorrin-2 + NAD(+) = sirohydrochlorin + NADH + 2 H(+). It catalyses the reaction siroheme + 2 H(+) = sirohydrochlorin + Fe(2+). It participates in cofactor biosynthesis; adenosylcobalamin biosynthesis; sirohydrochlorin from precorrin-2: step 1/1. Its pathway is porphyrin-containing compound metabolism; siroheme biosynthesis; siroheme from sirohydrochlorin: step 1/1. It functions in the pathway porphyrin-containing compound metabolism; siroheme biosynthesis; sirohydrochlorin from precorrin-2: step 1/1. The protein operates within porphyrin-containing compound metabolism; protoporphyrin-IX biosynthesis; 5-aminolevulinate from L-glutamyl-tRNA(Glu): step 1/2. In terms of biological role, multifunctional enzyme that catalyzes the NADPH-dependent reduction of glutamyl-tRNA(Glu) to glutamate 1-semialdehyde (GSA), the NAD-dependent ring dehydrogenation of precorrin-2 to sirohydrochlorin and finally, the ferrochelation of sirohydrochlorin to yield siroheme. The protein is Probable multifunctional siroheme biosynthesis protein HemA of Ruminiclostridium josui (Clostridium josui).